We begin with the raw amino-acid sequence, 130 residues long: ATP synthase epsilon chain (130 aa).

This sequence belongs to the ATPase epsilon chain family. F-type ATPases have 2 components, CF(1) - the catalytic core - and CF(0) - the membrane proton channel. CF(1) has five subunits: alpha(3), beta(3), gamma(1), delta(1), epsilon(1). CF(0) has three main subunits: a, b and c.

It is found in the cell membrane. In terms of biological role, produces ATP from ADP in the presence of a proton gradient across the membrane. The protein is ATP synthase epsilon chain (atpC) of Mycoplasmoides gallisepticum (strain R(low / passage 15 / clone 2)) (Mycoplasma gallisepticum).